Consider the following 219-residue polypeptide: OVARIAN TUMOR DOMAIN-containing deubiquitinating enzyme 12 (219 aa).

Positions 79–203 (LCELKVSGDG…EVHYNSLYDI (125 aa)) constitute an OTU domain. Asp-87 is an active-site residue. The active-site Nucleophile is the Cys-90. His-196 is an active-site residue.

The protein belongs to the peptidase C85 family.

It catalyses the reaction Thiol-dependent hydrolysis of ester, thioester, amide, peptide and isopeptide bonds formed by the C-terminal Gly of ubiquitin (a 76-residue protein attached to proteins as an intracellular targeting signal).. Functionally, hydrolase that can remove conjugated ubiquitin from proteins in vitro and may therefore play an important regulatory role at the level of protein turnover by preventing degradation. Inactive cysteine protease. The protein is OVARIAN TUMOR DOMAIN-containing deubiquitinating enzyme 12 of Arabidopsis thaliana (Mouse-ear cress).